The following is a 175-amino-acid chain: Zinc finger protein ZAT18 (175 aa).

2 consecutive C2H2-type zinc fingers follow at residues 49 to 71 (FECK…RASH) and 93 to 115 (HKCT…MRKH). Residues 71-78 (HKKPKLIV) carry the Nuclear localization signal motif. Positions 146–152 (LDLNLTP) match the EAR-like (transcriptional repression) motif.

Mostly expressed in stems, siliques and leaves, and, to a lower extent, in cotyledons, hypocotyls and roots.

It is found in the nucleus. In terms of biological role, transcription factor involved in stress responses. Positive regulator of the jasmonic acid (JA)- mediated signaling pathway. Triggers the up-regulation of LOX3, VSP2, PAL1 and PAL2 in a JA-dependent manner. Promotes drought and osmotic stress tolerance by preventing reactive oxygen species (ROS) production (e.g. H(2)O(2)). The polypeptide is Zinc finger protein ZAT18 (Arabidopsis thaliana (Mouse-ear cress)).